Reading from the N-terminus, the 160-residue chain is Large ribosomal subunit protein uL22c (160 aa).

It belongs to the universal ribosomal protein uL22 family. In terms of assembly, part of the 50S ribosomal subunit.

It localises to the plastid. The protein localises to the chloroplast. In terms of biological role, this protein binds specifically to 23S rRNA. Its function is as follows. The globular domain of the protein is located near the polypeptide exit tunnel on the outside of the subunit, while an extended beta-hairpin is found that lines the wall of the exit tunnel in the center of the 70S ribosome. This is Large ribosomal subunit protein uL22c (rpl22) from Aethionema cordifolium (Lebanon stonecress).